A 119-amino-acid polypeptide reads, in one-letter code: Acidic phospholipase A2 natratoxin (119 aa).

Disulfide bonds link Cys11/Cys71, Cys26/Cys118, Cys28/Cys44, Cys43/Cys99, Cys50/Cys92, Cys60/Cys85, and Cys78/Cys90. Residues Tyr27, Gly29, and Gly31 each contribute to the Ca(2+) site. Residue His47 is part of the active site. Residue Asp48 participates in Ca(2+) binding. The active site involves Asp93.

Belongs to the phospholipase A2 family. Group I subfamily. D49 sub-subfamily. Ca(2+) is required as a cofactor. Expressed by the venom gland.

The protein localises to the secreted. It carries out the reaction a 1,2-diacyl-sn-glycero-3-phosphocholine + H2O = a 1-acyl-sn-glycero-3-phosphocholine + a fatty acid + H(+). Functionally, snake venom phospholipase A2 (PLA2) that has an effectively inhibitory effect on A-type K(+) currents (Kv/KCN) in acutely dissociated rat dorsal root ganglion (DRG) neurons. This inhibitory effect is independent of its enzymatic activity. PLA2 catalyzes the calcium-dependent hydrolysis of the 2-acyl groups in 3-sn-phosphoglycerides. The polypeptide is Acidic phospholipase A2 natratoxin (Naja atra (Chinese cobra)).